The primary structure comprises 214 residues: Cytochrome b (214 aa).

4 helical membrane-spanning segments follow: residues 31-51 (FGSM…FLAI), 75-96 (WIMQ…YIHI), 111-131 (WLSG…GYVL), and 176-196 (FFAL…IHIL). Residues H81 and H95 each coordinate heme b. The heme b site is built by H180 and H194. H199 provides a ligand contact to a ubiquinone.

This sequence belongs to the cytochrome b family. The cytochrome bc1 complex contains 3 respiratory subunits (MT-CYB, CYC1 and UQCRFS1), 2 core proteins (UQCRC1 and UQCRC2) and probably 6 low-molecular weight proteins. The cofactor is heme b.

Its subcellular location is the mitochondrion inner membrane. Its function is as follows. Component of the ubiquinol-cytochrome c reductase complex (complex III or cytochrome b-c1 complex) that is part of the mitochondrial respiratory chain. The b-c1 complex mediates electron transfer from ubiquinol to cytochrome c. Contributes to the generation of a proton gradient across the mitochondrial membrane that is then used for ATP synthesis. The chain is Cytochrome b (MT-CYB) from Bothrops bilineatus (Green jararaca).